Here is a 318-residue protein sequence, read N- to C-terminus: Galactofuranose-binding protein YtfQ (318 aa).

Positions 1–21 (MWKRLLIVSAVSAAMSSMALA) are cleaved as a signal peptide. Residues 34–38 (ESGWR), 111–112 (DR), R167, N220, and D248 contribute to the beta-D-galactofuranose site. A disulfide bridge links C150 with C214.

The protein belongs to the bacterial solute-binding protein 2 family. As to quaternary structure, the complex is composed of two ATP-binding proteins (YtfR), two transmembrane proteins (YtfT and YjfF) and a solute-binding protein (YtfQ).

It is found in the periplasm. In terms of biological role, part of the ABC transporter complex YtfQRT-YjfF involved in galactofuranose transport. Binds to both alpha- and beta-galactofuranose. The chain is Galactofuranose-binding protein YtfQ (ytfQ) from Escherichia coli (strain K12).